The chain runs to 841 residues: SLIT and NTRK-like protein 6 (841 aa).

Residues Met1 to Ser26 form the signal peptide. The LRRNT 1 domain maps to Ser27–Phe67. At Ser27 to Ser608 the chain is on the extracellular side. LRR repeat units lie at residues Asn89–Gly110, Leu113–Gly134, Asn137–Lys158, Arg161–Phe182, and Pro184–Glu205. Positions Asn218–Thr269 constitute an LRRCT 1 domain. Residues Pro320–Pro361 form the LRRNT 2 domain. 6 LRR repeats span residues Asn364–Glu385, Thr388–Asn409, Arg412–Gly433, Asn436–Pro457, Lys460–Gly481, and Pro483–Asp504. One can recognise an LRRCT 2 domain in the interval Asn517–Gly568. The helical transmembrane segment at Val609–Val629 threads the bilayer. Residues Val630–Thr841 are Cytoplasmic-facing.

The protein belongs to the SLITRK family. As to expression, in adult brain, highly expressed in putamen with no expression in cerebral cortex. Expressed in adult and fetal lung and fetal liver. Also expressed at high levels in some brain tumors including medulloblastomas and primitive neuroectodermal tumors.

It is found in the cell membrane. Its function is as follows. Regulator of neurite outgrowth required for normal hearing and vision. The chain is SLIT and NTRK-like protein 6 (SLITRK6) from Homo sapiens (Human).